The chain runs to 353 residues: S-adenosylmethionine decarboxylase proenzyme (353 aa).

Catalysis depends on residues E9 and E12. Catalysis depends on S69, which acts as the Schiff-base intermediate with substrate; via pyruvic acid. A Pyruvic acid (Ser); by autocatalysis modification is found at S69. C83 (proton donor; for catalytic activity) is an active-site residue. Catalysis depends on proton acceptor; for processing activity residues S232 and H245.

The protein belongs to the eukaryotic AdoMetDC family. The cofactor is pyruvate. Post-translationally, is synthesized initially as an inactive proenzyme. Formation of the active enzyme involves a self-maturation process in which the active site pyruvoyl group is generated from an internal serine residue via an autocatalytic post-translational modification. Two non-identical subunits are generated from the proenzyme in this reaction, and the pyruvate is formed at the N-terminus of the alpha chain, which is derived from the carboxyl end of the proenzyme. The post-translation cleavage follows an unusual pathway, termed non-hydrolytic serinolysis, in which the side chain hydroxyl group of the serine supplies its oxygen atom to form the C-terminus of the beta chain, while the remainder of the serine residue undergoes an oxidative deamination to produce ammonia and the pyruvoyl group blocking the N-terminus of the alpha chain.

It carries out the reaction S-adenosyl-L-methionine + H(+) = S-adenosyl 3-(methylsulfanyl)propylamine + CO2. Its pathway is amine and polyamine biosynthesis; S-adenosylmethioninamine biosynthesis; S-adenosylmethioninamine from S-adenosyl-L-methionine: step 1/1. The chain is S-adenosylmethionine decarboxylase proenzyme (SAMDC) from Vicia faba (Broad bean).